The sequence spans 201 residues: MKWIGLTGGIACGKSTVSRMLRTHDIPVVDADEIAKEVVKPGSAGLKSVIQEFGPEFLTADGALDRRKLGQKVFGHPELLHKLEAITHPLIREETRRRRRLYEDMGHKLAIYDIPLLFETRAKDQFDGVIVVACTKEQQKERLRRQNWSEDEIEMRIASQIPIQFKEQQADFVLHNNRDEQHLLREVDRVLKWLEELKNQN.

Positions 3–201 (WIGLTGGIAC…KWLEELKNQN (199 aa)) constitute a DPCK domain. Residue 11–16 (ACGKST) participates in ATP binding.

This sequence belongs to the CoaE family.

Its subcellular location is the cytoplasm. The catalysed reaction is 3'-dephospho-CoA + ATP = ADP + CoA + H(+). It participates in cofactor biosynthesis; coenzyme A biosynthesis; CoA from (R)-pantothenate: step 5/5. Catalyzes the phosphorylation of the 3'-hydroxyl group of dephosphocoenzyme A to form coenzyme A. The chain is Dephospho-CoA kinase from Bdellovibrio bacteriovorus (strain ATCC 15356 / DSM 50701 / NCIMB 9529 / HD100).